The following is a 288-amino-acid chain: MASLKSIKKRIVSVKNTRQITKAMKMVSAAKLRRAQENVVAARPYAQKMGEVLQSLAGNLEGNLHPLLEKRDAKKLLLIVVTSDRGLCGGFNTNLCKAGERYIKEKQAEFDQISIMTVGRKGYEFLKSRHTVYKNFANMLSKPNYQAAAMLAQDVIEGYLAEEYDQVVMLFNSFRTVMSQDITFQQLLPIEPEEKIAADENGVEYIYEPSVSDLLTEILPKNIEVQIFKAMLESVAGEHGARMTAMDSASKNASEMIGKLTLQYNRARQAAITTELMEIISGAESIKG.

It belongs to the ATPase gamma chain family. As to quaternary structure, F-type ATPases have 2 components, CF(1) - the catalytic core - and CF(0) - the membrane proton channel. CF(1) has five subunits: alpha(3), beta(3), gamma(1), delta(1), epsilon(1). CF(0) has three main subunits: a, b and c.

Its subcellular location is the cell inner membrane. Functionally, produces ATP from ADP in the presence of a proton gradient across the membrane. The gamma chain is believed to be important in regulating ATPase activity and the flow of protons through the CF(0) complex. The sequence is that of ATP synthase gamma chain from Trichlorobacter lovleyi (strain ATCC BAA-1151 / DSM 17278 / SZ) (Geobacter lovleyi).